The chain runs to 506 residues: 2,3-bisphosphoglycerate-independent phosphoglycerate mutase (506 aa).

The Mn(2+) site is built by D13 and S63. The active-site Phosphoserine intermediate is the S63. Residues H124, 153–154 (RD), R183, R189, 255–258 (RADR), and K331 each bind substrate. Residues D397, H401, D438, H439, and H457 each coordinate Mn(2+).

Belongs to the BPG-independent phosphoglycerate mutase family. In terms of assembly, monomer. Mn(2+) serves as cofactor.

The catalysed reaction is (2R)-2-phosphoglycerate = (2R)-3-phosphoglycerate. It participates in carbohydrate degradation; glycolysis; pyruvate from D-glyceraldehyde 3-phosphate: step 3/5. Catalyzes the interconversion of 2-phosphoglycerate and 3-phosphoglycerate. The sequence is that of 2,3-bisphosphoglycerate-independent phosphoglycerate mutase from Ruegeria sp. (strain TM1040) (Silicibacter sp.).